The sequence spans 392 residues: Formate-dependent phosphoribosylglycinamide formyltransferase (392 aa).

Residues 12–13 and glutamate 72 contribute to the N(1)-(5-phospho-beta-D-ribosyl)glycinamide site; that span reads EL. ATP is bound by residues arginine 104, lysine 145, 150–155, 185–188, and glutamate 193; these read SSGKGQ and EAFV. One can recognise an ATP-grasp domain in the interval 109–300; it reads DLAARDLGLR…EFELHARAVL (192 aa). Mg(2+) contacts are provided by glutamate 258 and glutamate 270. Residues aspartate 277, lysine 348, and 355-356 contribute to the N(1)-(5-phospho-beta-D-ribosyl)glycinamide site; that span reads RR.

This sequence belongs to the PurK/PurT family. In terms of assembly, homodimer.

The enzyme catalyses N(1)-(5-phospho-beta-D-ribosyl)glycinamide + formate + ATP = N(2)-formyl-N(1)-(5-phospho-beta-D-ribosyl)glycinamide + ADP + phosphate + H(+). Its pathway is purine metabolism; IMP biosynthesis via de novo pathway; N(2)-formyl-N(1)-(5-phospho-D-ribosyl)glycinamide from N(1)-(5-phospho-D-ribosyl)glycinamide (formate route): step 1/1. In terms of biological role, involved in the de novo purine biosynthesis. Catalyzes the transfer of formate to 5-phospho-ribosyl-glycinamide (GAR), producing 5-phospho-ribosyl-N-formylglycinamide (FGAR). Formate is provided by PurU via hydrolysis of 10-formyl-tetrahydrofolate. This is Formate-dependent phosphoribosylglycinamide formyltransferase from Chlorobaculum tepidum (strain ATCC 49652 / DSM 12025 / NBRC 103806 / TLS) (Chlorobium tepidum).